The following is a 421-amino-acid chain: MATETNENLINSFIEITSSSREEANFFLESHTWNLDAAVSTFLDNDAAAAAEPNPTGPPPPSSTIAGAQSPSQSHSPDYTPSETSPSPSRSRSASPSSRAAPYGLRSRGGAGENKETENPSGIRSSRSRQHAGNIRTFADLNRSPADGEGSDSDEANEYYTGGQKSGMMVQDPKKVKDVDELFDQARQSAVDRPVEPSRSASTSFTGAARLLSGEAVSSSPQQQQQEQPQRIMHTITFWLNGFTVNDGPLRGFSDPENAAFMNSISRSECPSELEPADKKIPVHVDLVRRGENFTEPPKPKNPFQGVGRTLGASGSGSSSAPQASSAPMNVAPAPSRGLVVDPAAPTTSIQLRLADGTRLVSRFNNHHTVRDVRGFIDASRPGGSKEYQLLTMGFPPKQLTELDQTIEQAGIANAVVIQKF.

In terms of domain architecture, UBA spans 4–45 (ETNENLINSFIEITSSSREEANFFLESHTWNLDAAVSTFLDN). 2 disordered regions span residues 46–171 (DAAA…MMVQ) and 292–338 (ENFT…PSRG). The segment covering 69 to 84 (QSPSQSHSPDYTPSET) has biased composition (polar residues). The span at 85–102 (SPSPSRSRSASPSSRAAP) shows a compositional bias: low complexity. Positions 231–295 (RIMHTITFWL…DLVRRGENFT (65 aa)) constitute an SEP domain. Positions 312-328 (GASGSGSSSAPQASSAP) are enriched in low complexity. The 78-residue stretch at 343–420 (PAAPTTSIQL…GIANAVVIQK (78 aa)) folds into the UBX domain.

Interacts with CDC48A (non-hexameric) via its UBX domain.

The polypeptide is Plant UBX domain-containing protein 5 (Arabidopsis thaliana (Mouse-ear cress)).